We begin with the raw amino-acid sequence, 462 residues long: Na(+)/H(+) antiporter NhaA (462 aa).

Helical transmembrane passes span 24 to 44 (ISGL…NLPL), 66 to 86 (LPIG…TVGL), 102 to 122 (AAAV…ILFL), 156 to 176 (GWAV…ALFA), 196 to 216 (LLAI…YWFI), 235 to 255 (PWIA…EAGI), 256 to 275 (HPTL…VMHG), 290 to 310 (PFSA…VHFE), 312 to 332 (MSPL…LVVG), 361 to 381 (MIPA…IASL), and 392 to 412 (ARFG…VLLS).

Belongs to the NhaA Na(+)/H(+) (TC 2.A.33) antiporter family.

It is found in the cell membrane. It catalyses the reaction Na(+)(in) + 2 H(+)(out) = Na(+)(out) + 2 H(+)(in). Its function is as follows. Na(+)/H(+) antiporter that extrudes sodium in exchange for external protons. This Bifidobacterium breve (strain NCIMB 8807 / UCC2003) protein is Na(+)/H(+) antiporter NhaA.